We begin with the raw amino-acid sequence, 333 residues long: MGVALREVLTEYKHPRTWETLAGTAAIDGNNALYQFLSIIRQPDGTPLMNSEGRITSHLSGVFFRTLRFLEKGIRPVYIFDGKPPALKQETIESRREVRREAGVQWEAALARGDQEEAYKQARASSRVTPEIIATSKELLTLMGVPCVQAPSEGEAQAASMAASGAVTYAVSQDYDSLLFGAPLLVRNLTVSSKRRVQGRTIAVQPESIRLDEVLGGLGITREQLIEAGILIGTDFNPGIRGVGPKTALKIVKKDGFADMIAEKLPDFDPSPILQFFRSPPVIANLSLDWQPPDQAGIEDLLCGEYGFATERVRTALQKISGPPGQKTLDRWF.

An N-domain region spans residues methionine 1 to arginine 99. Positions 28, 81, 153, 155, 174, 176, and 235 each coordinate Mg(2+). Residues glutamate 117 to glycine 256 form an I-domain region. Residues glycine 325–phenylalanine 333 form an interaction with PCNA region.

Belongs to the XPG/RAD2 endonuclease family. FEN1 subfamily. In terms of assembly, interacts with PCNA. PCNA stimulates the nuclease activity without altering cleavage specificity. Requires Mg(2+) as cofactor.

Functionally, structure-specific nuclease with 5'-flap endonuclease and 5'-3' exonuclease activities involved in DNA replication and repair. During DNA replication, cleaves the 5'-overhanging flap structure that is generated by displacement synthesis when DNA polymerase encounters the 5'-end of a downstream Okazaki fragment. Binds the unpaired 3'-DNA end and kinks the DNA to facilitate 5' cleavage specificity. Cleaves one nucleotide into the double-stranded DNA from the junction in flap DNA, leaving a nick for ligation. Also involved in the base excision repair (BER) pathway. Acts as a genome stabilization factor that prevents flaps from equilibrating into structures that lead to duplications and deletions. Also possesses 5'-3' exonuclease activity on nicked or gapped double-stranded DNA. The chain is Flap endonuclease 1 from Methanosphaerula palustris (strain ATCC BAA-1556 / DSM 19958 / E1-9c).